A 348-amino-acid chain; its full sequence is D-amino-acid oxidase (348 aa).

FAD-binding residues include Ala15, Ile18, Lys40, Ser52, Gly56, and Asn58. 2 residues coordinate (R)-lactate: Tyr232 and Arg295. 2 residues coordinate anthranilate: Tyr232 and Arg295. The FAD site is built by Arg295, Ser323, Gly326, Tyr327, and Gln328.

The protein belongs to the DAMOX/DASOX family. Requires FAD as cofactor.

The protein resides in the peroxisome. The catalysed reaction is a D-alpha-amino acid + O2 + H2O = a 2-oxocarboxylate + H2O2 + NH4(+). It carries out the reaction D-serine + O2 + H2O = 3-hydroxypyruvate + H2O2 + NH4(+). The enzyme catalyses D-alanine + O2 + H2O = pyruvate + H2O2 + NH4(+). It catalyses the reaction D-arginine + O2 + H2O = 5-guanidino-2-oxopentanoate + H2O2 + NH4(+). In terms of biological role, catalyzes the oxidative deamination of D-amino acids with broad substrate specificity. Enables the organism to utilize D-amino acids as a source of nutrients. The protein is D-amino-acid oxidase of Schizosaccharomyces pombe (strain 972 / ATCC 24843) (Fission yeast).